The sequence spans 230 residues: Orotidine 5'-phosphate decarboxylase (230 aa).

Substrate contacts are provided by residues D10, K32, 59–68, T118, R179, Q188, G208, and R209; that span reads DLKLHDIPNT. The active-site Proton donor is the K61.

This sequence belongs to the OMP decarboxylase family. Type 1 subfamily. Homodimer.

It carries out the reaction orotidine 5'-phosphate + H(+) = UMP + CO2. Its pathway is pyrimidine metabolism; UMP biosynthesis via de novo pathway; UMP from orotate: step 2/2. In terms of biological role, catalyzes the decarboxylation of orotidine 5'-monophosphate (OMP) to uridine 5'-monophosphate (UMP). This chain is Orotidine 5'-phosphate decarboxylase, found in Opitutus terrae (strain DSM 11246 / JCM 15787 / PB90-1).